The chain runs to 430 residues: Sorting nexin-4 (430 aa).

Residues 1–18 (MDSASADASVTGSGNAKG) are compositionally biased toward polar residues. The interval 1–22 (MDSASADASVTGSGNAKGSSAE) is disordered. A PX domain is found at 33-162 (LEILVSDPQK…IFLVGNEWDT (130 aa)). Positions 83, 109, and 128 each coordinate a 1,2-diacyl-sn-glycero-3-phospho-(1D-myo-inositol-3-phosphate). Residues 351 to 414 (ASRRDKINKL…NNLADENIKF (64 aa)) adopt a coiled-coil conformation.

Belongs to the sorting nexin family.

The protein resides in the cytoplasm. It is found in the cytosol. It localises to the preautophagosomal structure membrane. Its subcellular location is the endosome membrane. Its function is as follows. Sorting nexin, involved in the separation or division of vacuoles throughout the entire life cycle of the cells. Involved in retrieval of late-Golgi SNAREs from post-Golgi endosomes to the trans-Golgi network, for cytoplasm to vacuole transport (Cvt), and autophagy of large cargos including mitophagy, pexophagy and glycophagy. This is Sorting nexin-4 (SNX4) from Candida glabrata (strain ATCC 2001 / BCRC 20586 / JCM 3761 / NBRC 0622 / NRRL Y-65 / CBS 138) (Yeast).